Consider the following 301-residue polypeptide: NADH-cytochrome b5 reductase 3 (301 aa).

Residue Gly-2 is the site of N-myristoyl glycine attachment. The 113-residue stretch at Asp-40–Gln-152 folds into the FAD-binding FR-type domain. Lys-42 is modified (N6-acetyllysine). At Tyr-43 the chain carries Phosphotyrosine. Lys-50 carries the post-translational modification N6-acetyllysine. Residues Arg-92, Pro-93, Tyr-94, Val-109, Lys-111, and Phe-114 each contribute to the FAD site. An N6-acetyllysine modification is found at Lys-120. Positions 126, 127, 128, and 185 each coordinate FAD.

Belongs to the flavoprotein pyridine nucleotide cytochrome reductase family. In terms of assembly, component of a complex composed of cytochrome b5, NADH-cytochrome b5 reductase (CYB5R3) and MTARC2. Interacts with MTLN; the interaction is required to maintain cellular lipid composition and leads to stimulation of mitochondrial respiratory complex I activity. The cofactor is FAD.

It localises to the endoplasmic reticulum membrane. It is found in the mitochondrion outer membrane. The catalysed reaction is 2 Fe(III)-[cytochrome b5] + NADH = 2 Fe(II)-[cytochrome b5] + NAD(+) + H(+). In terms of biological role, catalyzes the reduction of two molecules of cytochrome b5 using NADH as the electron donor. The chain is NADH-cytochrome b5 reductase 3 from Mus musculus (Mouse).